The chain runs to 427 residues: Trigger factor (427 aa).

Residues 163 to 248 (GNIAIIDFKG…VKGIKAKELP (86 aa)) form the PPIase FKBP-type domain.

This sequence belongs to the FKBP-type PPIase family. Tig subfamily.

The protein resides in the cytoplasm. It catalyses the reaction [protein]-peptidylproline (omega=180) = [protein]-peptidylproline (omega=0). In terms of biological role, involved in protein export. Acts as a chaperone by maintaining the newly synthesized protein in an open conformation. Functions as a peptidyl-prolyl cis-trans isomerase. The polypeptide is Trigger factor (Clostridium botulinum (strain Eklund 17B / Type B)).